Reading from the N-terminus, the 788-residue chain is Phosphoribosylformylglycinamidine synthase subunit PurL (788 aa).

Residue histidine 50 is part of the active site. ATP-binding residues include tyrosine 53 and lysine 92. A Mg(2+)-binding site is contributed by glutamate 94. Substrate-binding positions include 95-98 (SHNH) and arginine 117. Residue histidine 96 is the Proton acceptor of the active site. Aspartate 118 contacts Mg(2+). Glutamine 241 contributes to the substrate binding site. Aspartate 269 is a Mg(2+) binding site. 313-315 (ESQ) serves as a coordination point for substrate. ATP contacts are provided by aspartate 524 and glycine 561. Asparagine 562 contacts Mg(2+). Residue serine 564 coordinates substrate.

Belongs to the FGAMS family. Monomer. Part of the FGAM synthase complex composed of 1 PurL, 1 PurQ and 2 PurS subunits.

The protein localises to the cytoplasm. The catalysed reaction is N(2)-formyl-N(1)-(5-phospho-beta-D-ribosyl)glycinamide + L-glutamine + ATP + H2O = 2-formamido-N(1)-(5-O-phospho-beta-D-ribosyl)acetamidine + L-glutamate + ADP + phosphate + H(+). It functions in the pathway purine metabolism; IMP biosynthesis via de novo pathway; 5-amino-1-(5-phospho-D-ribosyl)imidazole from N(2)-formyl-N(1)-(5-phospho-D-ribosyl)glycinamide: step 1/2. Its function is as follows. Part of the phosphoribosylformylglycinamidine synthase complex involved in the purines biosynthetic pathway. Catalyzes the ATP-dependent conversion of formylglycinamide ribonucleotide (FGAR) and glutamine to yield formylglycinamidine ribonucleotide (FGAM) and glutamate. The FGAM synthase complex is composed of three subunits. PurQ produces an ammonia molecule by converting glutamine to glutamate. PurL transfers the ammonia molecule to FGAR to form FGAM in an ATP-dependent manner. PurS interacts with PurQ and PurL and is thought to assist in the transfer of the ammonia molecule from PurQ to PurL. This Nostoc punctiforme (strain ATCC 29133 / PCC 73102) protein is Phosphoribosylformylglycinamidine synthase subunit PurL.